We begin with the raw amino-acid sequence, 128 residues long: Large ribosomal subunit protein eL32 (128 aa).

This sequence belongs to the eukaryotic ribosomal protein eL32 family.

This chain is Large ribosomal subunit protein eL32 (rpl32e), found in Thermoplasma volcanium (strain ATCC 51530 / DSM 4299 / JCM 9571 / NBRC 15438 / GSS1).